Here is a 316-residue protein sequence, read N- to C-terminus: Myb-related protein 306 (316 aa).

HTH myb-type domains follow at residues 9–65 (KIGV…RPGI) and 66–116 (KRGD…KKKL). DNA-binding regions (H-T-H motif) lie at residues 37 to 61 (WRAIPSNTGLLRCSKSCRLRWTNYL) and 89 to 112 (WAAIASYLPHRTDNDIKNYWNTHL). 3 disordered regions span residues 119–144 (LQSPENGKCQDGNSSVDSDKSVSKGQ), 168–193 (KTSSSTDDPKLSTVQTTQPRPFQAST), and 209–230 (KKSPVNASSTSQAGSSESTTTS). The segment covering 135 to 144 (DSDKSVSKGQ) has biased composition (basic and acidic residues). Residues 181 to 193 (VQTTQPRPFQAST) are compositionally biased toward polar residues. A compositionally biased stretch (low complexity) spans 216–230 (SSTSQAGSSESTTTS).

Expressed in flowers, leaves and weakly in seed pods.

The protein localises to the nucleus. In terms of biological role, transcription factor. The protein is Myb-related protein 306 of Antirrhinum majus (Garden snapdragon).